A 343-amino-acid polypeptide reads, in one-letter code: L-threonine 3-dehydrogenase (343 aa).

Residue C38 participates in Zn(2+) binding. Catalysis depends on charge relay system residues T40 and H43. Zn(2+) is bound by residues H63, E64, C93, C96, C99, and C107. NAD(+) is bound by residues I175, D195, R200, 262–264 (LGI), and 286–287 (IY).

It belongs to the zinc-containing alcohol dehydrogenase family. Homotetramer. Requires Zn(2+) as cofactor.

The protein localises to the cytoplasm. The catalysed reaction is L-threonine + NAD(+) = (2S)-2-amino-3-oxobutanoate + NADH + H(+). The protein operates within amino-acid degradation; L-threonine degradation via oxydo-reductase pathway; glycine from L-threonine: step 1/2. In terms of biological role, catalyzes the NAD(+)-dependent oxidation of L-threonine to 2-amino-3-ketobutyrate. This chain is L-threonine 3-dehydrogenase, found in Paraburkholderia phytofirmans (strain DSM 17436 / LMG 22146 / PsJN) (Burkholderia phytofirmans).